A 620-amino-acid polypeptide reads, in one-letter code: 1-deoxy-D-xylulose-5-phosphate synthase (620 aa).

Thiamine diphosphate is bound by residues His80 and 121–123; that span reads GHS. Residue Asp152 participates in Mg(2+) binding. Thiamine diphosphate-binding positions include 153–154, Asn181, Tyr288, and Glu370; that span reads GA. Mg(2+) is bound at residue Asn181.

The protein belongs to the transketolase family. DXPS subfamily. As to quaternary structure, homodimer. Requires Mg(2+) as cofactor. Thiamine diphosphate is required as a cofactor.

The enzyme catalyses D-glyceraldehyde 3-phosphate + pyruvate + H(+) = 1-deoxy-D-xylulose 5-phosphate + CO2. Its pathway is metabolic intermediate biosynthesis; 1-deoxy-D-xylulose 5-phosphate biosynthesis; 1-deoxy-D-xylulose 5-phosphate from D-glyceraldehyde 3-phosphate and pyruvate: step 1/1. Functionally, catalyzes the acyloin condensation reaction between C atoms 2 and 3 of pyruvate and glyceraldehyde 3-phosphate to yield 1-deoxy-D-xylulose-5-phosphate (DXP). This Escherichia coli O157:H7 protein is 1-deoxy-D-xylulose-5-phosphate synthase.